The following is a 140-amino-acid chain: Large-conductance mechanosensitive channel (140 aa).

Helical transmembrane passes span 9–29 (AFAL…GAAF) and 86–106 (GSFL…FLMV).

This sequence belongs to the MscL family. As to quaternary structure, homopentamer.

Its subcellular location is the cell inner membrane. Its function is as follows. Channel that opens in response to stretch forces in the membrane lipid bilayer. May participate in the regulation of osmotic pressure changes within the cell. This Anaeromyxobacter dehalogenans (strain 2CP-1 / ATCC BAA-258) protein is Large-conductance mechanosensitive channel.